The primary structure comprises 318 residues: Replication factor C small subunit (318 aa).

43–50 contacts ATP; it reads GSVGTGKT.

The protein belongs to the activator 1 small subunits family. RfcS subfamily. In terms of assembly, heteromultimer composed of small subunits (RfcS) and large subunits (RfcL).

Its function is as follows. Part of the RFC clamp loader complex which loads the PCNA sliding clamp onto DNA. This Thermoplasma acidophilum (strain ATCC 25905 / DSM 1728 / JCM 9062 / NBRC 15155 / AMRC-C165) protein is Replication factor C small subunit.